The sequence spans 130 residues: Small ribosomal subunit protein uS8 (130 aa).

Belongs to the universal ribosomal protein uS8 family. In terms of assembly, part of the 30S ribosomal subunit. Contacts proteins S5 and S12.

One of the primary rRNA binding proteins, it binds directly to 16S rRNA central domain where it helps coordinate assembly of the platform of the 30S subunit. This is Small ribosomal subunit protein uS8 from Marinomonas sp. (strain MWYL1).